Reading from the N-terminus, the 228-residue chain is ATP-dependent dethiobiotin synthetase BioD (228 aa).

Residue 13–18 participates in ATP binding; sequence DIGKTF. Threonine 17 is a Mg(2+) binding site. Lysine 38 is a catalytic residue. Serine 42 lines the substrate pocket. ATP-binding positions include aspartate 55, 116–119, 179–180, and 208–210; these read EGSG, NK, and PKI. The Mg(2+) site is built by aspartate 55 and glutamate 116.

Belongs to the dethiobiotin synthetase family. As to quaternary structure, homodimer. Mg(2+) is required as a cofactor.

It localises to the cytoplasm. It catalyses the reaction (7R,8S)-7,8-diammoniononanoate + CO2 + ATP = (4R,5S)-dethiobiotin + ADP + phosphate + 3 H(+). It functions in the pathway cofactor biosynthesis; biotin biosynthesis; biotin from 7,8-diaminononanoate: step 1/2. Its function is as follows. Catalyzes a mechanistically unusual reaction, the ATP-dependent insertion of CO2 between the N7 and N8 nitrogen atoms of 7,8-diaminopelargonic acid (DAPA, also called 7,8-diammoniononanoate) to form a ureido ring. In Clostridium perfringens (strain 13 / Type A), this protein is ATP-dependent dethiobiotin synthetase BioD.